Reading from the N-terminus, the 215-residue chain is Autophagy-related protein 101 (215 aa).

The tract at residues 124-147 is disordered; that stretch reads PVGKSHHSKLVMDPGEASEERSSR.

Belongs to the ATG101 family. As to quaternary structure, interacts with ATG11 and ATG13A.

The protein localises to the cytoplasmic vesicle. It localises to the autophagosome. Accessory protein involved in autophagy. Acts as a scaffold protein of the ATG1-ATG13 complex for faithful delivery of autophagic vesicles to the vacuole. Required for selective mitophagy. This Arabidopsis thaliana (Mouse-ear cress) protein is Autophagy-related protein 101.